Consider the following 77-residue polypeptide: Conotoxin PnMEKL-04 (77 aa).

The signal sequence occupies residues 1–19 (MEKLTILLLVAAVLMSTQA). A propeptide spanning residues 20–45 (LPQGGGENRLKENIKFLLKRKTAADR) is cleaved from the precursor. Intrachain disulfides connect C51–C65, C58–C69, and C64–C73.

It belongs to the conotoxin O2 superfamily. Expressed by the venom duct.

Its subcellular location is the secreted. The sequence is that of Conotoxin PnMEKL-04 from Conus pennaceus (Feathered cone).